A 472-amino-acid polypeptide reads, in one-letter code: 3-isopropylmalate dehydratase large subunit (472 aa).

Residues C347, C407, and C410 each coordinate [4Fe-4S] cluster.

Belongs to the aconitase/IPM isomerase family. LeuC type 1 subfamily. In terms of assembly, heterodimer of LeuC and LeuD. [4Fe-4S] cluster serves as cofactor.

The enzyme catalyses (2R,3S)-3-isopropylmalate = (2S)-2-isopropylmalate. It participates in amino-acid biosynthesis; L-leucine biosynthesis; L-leucine from 3-methyl-2-oxobutanoate: step 2/4. Catalyzes the isomerization between 2-isopropylmalate and 3-isopropylmalate, via the formation of 2-isopropylmaleate. In Synechococcus sp. (strain CC9605), this protein is 3-isopropylmalate dehydratase large subunit.